The following is a 377-amino-acid chain: DNA methyltransferase CcrM (377 aa).

Residues 271–373 (LGKAELTVMT…LRKIIREQMA (103 aa)) form the RAMA domain.

Belongs to the N(4)/N(6)-methyltransferase family.

The enzyme catalyses a 2'-deoxyadenosine in DNA + S-adenosyl-L-methionine = an N(6)-methyl-2'-deoxyadenosine in DNA + S-adenosyl-L-homocysteine + H(+). In terms of biological role, a beta subtype methylase that recognizes the double-stranded sequence 5'-GANTC-3' and methylates on A-2 on both strands. Overexpression from a moderate-copy number plasmid (10-12 copies/cell) leads to enlarged, branched cells, many with 3-5 genome equivalents. Contributes to the accurate cell-cycle control of DNA replication and cellular morphology. This is DNA methyltransferase CcrM from Brucella abortus (strain 2308).